Here is a 2332-residue protein sequence, read N- to C-terminus: MNTTNCFIALVYLIREIKTLFRSRTKGKMEFTLHNGEKKTFYSRPNNHDNCWLNTILQLFRYVDEPFFDWVYNSPENLTLDAIKQLENFTGLELHEGGPPALVIWNIKHLLQTGIGTASRPSEVCMVDGTDMCLADFHAGIFMKGQEHAVFACVTSDGWYAIDDEDFYPWTPDPSDVLVFVPYDQEPLNGDWKTQVQKKLKGAGQSSPATGSQNQSGNTGSIINNYYMQQYQNSMSTQLGDNTISGGSNEGSTDTTSTHTTNTQNNDWFSKLASSAFTGLFGALLADKKTEETTLLEDRILTTRNGHTTSTTQSSVGVTYGYSTEEDHVAGPNTSGLETRVVQAERFFKKFLFDWTTDKPFGYLTKLELPTDHHGVFGHLVDSYAYMRNGWDVEVSAVGNQFNGGCLLVAMVPEWKAFDTREKYQLTLFPHQFISPRTNMTAHITVPYLGVNRYDQYKKHKPWTLVVMVLSPLTVSNTAAPQIKVYANIAPTYVHVAGELPSKEGIFPVACADGYGGLVTTDPKTADPVYGKVYNPPKTNYPGRFTNLLDVAEACPTFLRFDDGKPYVVTRADDTRLLAKFDVSLAAKHMSNTYLSGIAQYYTQYSGTINLHFMFTGSTDSKARYMVAYIPPGVETPPDTPEEAAHCIHAEWDTGLNSKFTFSIPYVSAADYAYTASDTAETTNVQGWVCVYQITHGKAENDTLLVSASAGKDFELRLPIDPRTQTTTTGESADPVTTTVENYGGDTQVQRRHHTDVGFIMDRFVKINSLSPTHVIDLMQTHKHGIVGALLRAATYYFSDLEIVVRHDGNLTWVPNGAPEAALSNTSNPTAYNKAPFTRLALPYTAPHRVLATVYDGTNKYSASDSRSGDLGSIAARVATQLPASFNYGAIQAQAIHELLVRMKRAELYCPRPLLAIKVTSQDRYKQKIIAPAKQLLNFDLLKLAGDVESNLGPFFFADVRSNFSKLVDTINQMQEDMSTKHGPDFNRLVSAFEELATGVKAIRTGLDEAKPWYKLIKLLSRLSCMAAVAARSKDPVLVAIMLADTGLEILDSTFVVKKSSDSLSSLFHVPAPAFSFGAPVLLAGLVKVASSFFRSTPEDLERAEKQLKARDINDIFAILKNGEWLVKLILAIRDWIKAWIASEEKFVTMTDLVPGILEKQRDLNDPGKYKEAKEWLDNARQACLKSGNVHIANLCKVVAPAPSKSRPEPVVVCLRGKSGQGKSFLANVLAQAISTHFTGRIDSVWYCPPDPDHFDGYNQQTVVVMDDLGQNPDGKDFKYFAQMVSTTGFIPPMASLEDKGKPFNSKVIIATTNLYSGFTPRTMVCPDALNRRFHFDIDVSAKDGYKINNKLDIIKALEDTHTNPVAMFQYDCALLNGMAVEMKRLQQDMFKPQPPLQNVYQLVQEVIERVELHEKVSSHPIFKQISIPSQKSVLYFLIEKGQHEAAIEFFEGMVHDSVKEELRPLIQQTSFVKRAFKRLKENFEIVALCLTLLANIVIMIRETRKRQKMVDDAVNEYIERANITTDDKTLDEAEKNPLETSGASTVGFRERSLTGQKVRDDVSSEPAQPAEDQPQAEGPYSGPLERQKPLKVRAKLPQQEGPYAGPMERQKPLKVKVKAPVVKEGPYEGPVKKPVALKVKARNLIVTESGAPPTDLQKMVMGNTKPVELNLDGKTVAICCATGVFGTAYLVPRHLFAEKYDKIMLDGRAMTDSDYRVFEFEIKVKGQDMLSDAALIVLHRGNCVRDITKHFRDTARMKKGTPVVGVVNNADVGRLIFSGEALTYKDIVVCMDGDTMPGLFAYKAATRAGYCGGAVLAKDGADTFIVGTHSAGGNGVGYCSCVSRSMLQKMKAHVDPEPHHEGLIVDTRDVEERVHVMRKTKLAPTVAYGVFNPEFGPAALSNKDPRLNEGVVLDDVIFSKHKGDAKMTEEDKALFRRCAADYASRLHSVLGTANAPLSIYEAIKGVDGLDAMEPDTAPGLPWALQGKRRGALIDFENGTVGPEVEAALKLMEKREYKFACQTFLKDEIRPMEKVRAGKTRIVDVLPVEHILYTKMMIGRFCAQMHSNNGPQIGSAVGCNPDVDWQRFGTHFAQYRNVWDVDYSAFDANHCSDAMNIMFEEVFRTDFGFHPNAEWILKTLVNTEHAYENKRITVEGGMPSGCSATSIINTILNNIYVLYALRRHYEGVELDTYTMISYGDDIVVASDYDLDFEALKPHFKSLGQTITPADKSDKGFVLGQSITDVTFLKRHFHMDYGTGFYKPVMASKTLEAILSFARRGTIQEKLISVAGLAVHSGPDEYRRLFEPFQGLFEIPSYRSLYLRWVNAVCGDA.

Positions 1–201 constitute a Peptidase C28 domain; that stretch reads MNTTNCFIAL…WKTQVQKKLK (201 aa). The Cytoplasmic segment spans residues 1 to 1480; it reads MNTTNCFIAL…SFVKRAFKRL (1480 aa). Catalysis depends on for leader protease activity residues Cys51, His148, and Asp163. Disordered regions lie at residues 199 to 218 and 237 to 264; these read KLKGAGQSSPATGSQNQSGN and TQLGDNTISGGSNEGSTDTTSTHTTNTQ. Gly202 carries the N-myristoyl glycine; by host lipid modification. 2 stretches are compositionally biased toward polar residues: residues 204–218 and 237–251; these read GQSSPATGSQNQSGN and TQLGDNTISGGSNEG. The span at 252–264 shows a compositional bias: low complexity; it reads STDTTSTHTTNTQ. An antigenic epitope region spans residues 789–797; that stretch reads ALLRAATYY. The Cell attachment site signature appears at 867 to 870; sequence RSGD. Positions 1189–1353 constitute an SF3 helicase domain; sequence NVHIANLCKV…DGYKINNKLD (165 aa). 1217-1224 is a binding site for ATP; that stretch reads GKSGQGKS. The stretch at 1481–1501 is an intramembrane region; the sequence is KENFEIVALCLTLLANIVIMI. Residues 1502 to 2332 lie on the Cytoplasmic side of the membrane; that stretch reads RETRKRQKMV…RWVNAVCGDA (831 aa). Composition is skewed to basic and acidic residues over residues 1529–1538 and 1549–1563; these read KTLDEAEKNP and FRERSLTGQKVRDDV. Residues 1529-1588 form a disordered region; that stretch reads KTLDEAEKNPLETSGASTVGFRERSLTGQKVRDDVSSEPAQPAEDQPQAEGPYSGPLERQ. O-(5'-phospho-RNA)-tyrosine occurs at positions 1581, 1604, and 1628. One can recognise a Peptidase C3 domain in the interval 1652-1848; the sequence is APPTDLQKMV…YCSCVSRSML (197 aa). His1695 functions as the For protease 3C activity; Proton donor/acceptor in the catalytic mechanism. Residues Asp1733 and Cys1812 each act as for protease 3C activity in the active site. The Nuclear localization signal motif lies at 1878–1886; the sequence is MRKTKLAPT. The RdRp catalytic domain occupies 2096–2214; sequence RNVWDVDYSA…ASDYDLDFEA (119 aa). Catalysis depends on Asp2200, which acts as the For RdRp activity.

This sequence belongs to the picornaviruses polyprotein family. Interacts with host ISG15. In terms of assembly, interacts (via R-G-D motif) with host ITGAV/ITGB6. Interacts with host MAVS; this interaction inhibits binding of host TRAF3 to MAVS, thereby suppressing interferon-mediated responses. As to quaternary structure, forms homooligomers. Homohexamer. Interacts with host VIM. Interacts with host BECN1. In terms of assembly, interacts with host DCTN3. As to quaternary structure, interacts with RNA-dependent RNA polymerase; this interaction allows 3B-1 to binds 2 polymerases and act as a primer. It also allows the recruitment of the RNA-dependent RNA polymerase to host membranes. Interacts with RNA-dependent RNA polymerase; this interaction allows 3B-2 to act as a primer. In terms of assembly, interacts with RNA-dependent RNA polymerase; this interaction allows 3B-3 to act as a primer. As to quaternary structure, interacts with 3B-1; this interaction allows 3B-1 to binds 2 polymerases and act as a primer. It also allows the recruitment of the RNA-dependent RNA polymerase to host membranes. Interacts with 3B-2; this interaction allows 3B-2 to act as a primer. Interacts with 3B-3; this interaction allows 3B-3 to act as a primer. Post-translationally, removes six residues from its own C-terminus, generating sLb(pro). In terms of processing, specific enzymatic cleavages in vivo by the viral proteases yield a variety of precursors and mature proteins. The polyprotein seems to be cotranslationally cleaved at the 2A/2B junction by a ribosomal skip from one codon to the next without formation of a peptide bond. This process would release the L-P1-2A peptide from the translational complex. During virion maturation, immature virions are rendered infectious following cleavage of VP0 into VP4 and VP2. This maturation seems to be an autocatalytic event triggered by the presence of RNA in the capsid and is followed by a conformational change of the particle. Post-translationally, myristoylation is required during RNA encapsidation and formation of the mature virus particle. In terms of processing, uridylylated by the polymerase and covalently linked to the 5'-end of genomic RNA. These uridylylated forms act as a nucleotide-peptide primer for the polymerase.

Its subcellular location is the host nucleus. It localises to the host cytoplasm. The protein localises to the virion. The protein resides in the host endoplasmic reticulum membrane. It is found in the host cytoplasmic vesicle membrane. The catalysed reaction is Autocatalytically cleaves itself from the polyprotein of the foot-and-mouth disease virus by hydrolysis of a Lys-|-Gly bond, but then cleaves host cell initiation factor eIF-4G at bonds -Gly-|-Arg- and -Lys-|-Arg-.. The enzyme catalyses a ribonucleoside 5'-triphosphate + H2O = a ribonucleoside 5'-diphosphate + phosphate + H(+). It carries out the reaction RNA(n) + a ribonucleoside 5'-triphosphate = RNA(n+1) + diphosphate. It catalyses the reaction Selective cleavage of Gln-|-Gly bond in the poliovirus polyprotein. In other picornavirus reactions Glu may be substituted for Gln, and Ser or Thr for Gly.. Functionally, autocatalytically cleaves itself from the polyprotein at the L/VP0 junction. Also cleaves the host translation initiation factors EIF4G1 and EIF4G3, in order to shut off the capped cellular mRNA transcription. Plays a role in counteracting host innate antiviral response using diverse mechanisms. Possesses a deubiquitinase activity acting on both 'Lys-48' and 'Lys-63'-linked polyubiquitin chains. In turn, inhibits the ubiquitination and subsequent activation of key signaling molecules of type I IFN response such as host RIGI, TBK1, TRAF3 and TRAF6. Inhibits host NF-kappa-B activity by inducing a decrease in RELA mRNA levels. Cleaves a peptide bond in the C-terminus of host ISG15, resulting in the damaging of this modifier that can no longer be attached to target proteins. Also cleaves host G3BP1 and G3BP2 in order to inhibit cytoplasmic stress granules assembly. In terms of biological role, lies on the inner surface of the capsid shell. After binding to the host receptor, the capsid undergoes conformational changes. Capsid protein VP4 is released, capsid protein VP1 N-terminus is externalized, and together, they shape a pore in the host membrane through which the viral genome is translocated into the host cell cytoplasm. After genome has been released, the channel shrinks. Its function is as follows. Forms an icosahedral capsid of pseudo T=3 symmetry with capsid proteins VP1 and VP3. The capsid is composed of 60 copies of each capsid protein organized in the form of twelve pentamers and encloses the viral positive strand RNA genome. Upon acidifcation in the endosome, dissociates into pentamers. Forms an icosahedral capsid of pseudo T=3 symmetry with capsid proteins VP2 and VP3. The capsid is composed of 60 copies of each capsid protein organized in the form of twelve pentamers and encloses the viral positive strand RNA genome. Mediates cell entry by attachment to an integrin receptor, usually host ITGAV/ITGB6. In addition, targets host MAVS to suppress type I IFN pathway. Upon acidifcation in the endosome, dissociates into pentamers. Functionally, forms an icosahedral capsid of pseudo T=3 symmetry with capsid proteins VP0 and VP3. The capsid is composed of 60 copies of each capsid protein organized in the form of twelve pentamers and encloses the viral positive strand RNA genome. In terms of biological role, mediates self-processing of the polyprotein by a translational effect termed 'ribosome skipping'. Mechanistically, 2A-mediated cleavage occurs between the C-terminal glycine and the proline of the downstream protein 2B. In the case of foot-and-mouth disease virus, the 2A oligopeptide is post-translationally 'trimmed' from the C-terminus of the upstream protein 1D by 3C proteinase. Its function is as follows. Plays an essential role in the virus replication cycle by acting as a viroporin. Creates a pore in the host endoplasmic reticulum and as a consequence releases Ca2+ in the cytoplasm of infected cell. In turn, high levels of cytoplasmic calcium may trigger membrane trafficking and transport of viral ER-associated proteins to viroplasms, sites of viral genome replication. Associates with and induces structural rearrangements of intracellular membranes. Triggers host autophagy by interacting with host BECN1 and thereby promotes viral replication. Participates in viral replication and interacts with host DHX9. Displays RNA-binding, nucleotide binding and NTPase activities. May play a role in virion morphogenesis and viral RNA encapsidation by interacting with the capsid protein VP3. Functionally, plays important roles in virus replication, virulence and host range. Cooperates with host DDX56 to inhibit IRF3 nuclear translocation and subsequent type I interferon production. In terms of biological role, covalently linked to the 5'-end of both the positive-strand and negative-strand genomic RNAs. Acts as a genome-linked replication primer. Its function is as follows. Covalently linked to the 5'-end0 of both the positive-strand and negative-strand genomic RNAs. Acts as a genome-linked replication primer. Cysteine protease that generates mature viral proteins from the precursor polyprotein. In addition to its proteolytic activity, binds to viral RNA and thus influences viral genome replication. RNA and substrate bind cooperatively to the protease. Functionally, RNA-directed RNA polymerase 3D-POL replicates genomic and antigenomic RNA by recognizing replications specific signals. Covalently attaches UMP to a tyrosine of VPg, which is used to prime RNA synthesis. The positive stranded RNA genome is first replicated at virus induced membranous vesicles, creating a dsRNA genomic replication form. This dsRNA is then used as template to synthesize positive stranded RNA genomes. ss(+)RNA genomes are either translated, replicated or encapsidated. In Bos taurus (Bovine), this protein is Genome polyprotein.